The primary structure comprises 364 residues: Dual-specificity RNA methyltransferase RlmN (364 aa).

The active-site Proton acceptor is the Glu91. The Radical SAM core domain maps to 97-333; that stretch reads EDDRGTLCVS…VTVRKTRGDD (237 aa). The cysteines at positions 104 and 338 are disulfide-linked. [4Fe-4S] cluster is bound by residues Cys111, Cys115, and Cys118. S-adenosyl-L-methionine is bound by residues 164–165, Ser196, 218–220, and Asn295; these read GE and SLH. The active-site S-methylcysteine intermediate is the Cys338.

It belongs to the radical SAM superfamily. RlmN family. [4Fe-4S] cluster is required as a cofactor.

The protein localises to the cytoplasm. The enzyme catalyses adenosine(2503) in 23S rRNA + 2 reduced [2Fe-2S]-[ferredoxin] + 2 S-adenosyl-L-methionine = 2-methyladenosine(2503) in 23S rRNA + 5'-deoxyadenosine + L-methionine + 2 oxidized [2Fe-2S]-[ferredoxin] + S-adenosyl-L-homocysteine. It catalyses the reaction adenosine(37) in tRNA + 2 reduced [2Fe-2S]-[ferredoxin] + 2 S-adenosyl-L-methionine = 2-methyladenosine(37) in tRNA + 5'-deoxyadenosine + L-methionine + 2 oxidized [2Fe-2S]-[ferredoxin] + S-adenosyl-L-homocysteine. Specifically methylates position 2 of adenine 2503 in 23S rRNA and position 2 of adenine 37 in tRNAs. m2A2503 modification seems to play a crucial role in the proofreading step occurring at the peptidyl transferase center and thus would serve to optimize ribosomal fidelity. In Chromobacterium violaceum (strain ATCC 12472 / DSM 30191 / JCM 1249 / CCUG 213 / NBRC 12614 / NCIMB 9131 / NCTC 9757 / MK), this protein is Dual-specificity RNA methyltransferase RlmN.